The primary structure comprises 216 residues: Uracil phosphoribosyltransferase (216 aa).

30–34 (KNLVK) contributes to the GTP binding site. 5-phospho-alpha-D-ribose 1-diphosphate is bound by residues Arg-80, Arg-105, and 140 to 148 (DPMIATGST). Residues Ile-203 and 208 to 210 (GDA) each bind uracil. 5-phospho-alpha-D-ribose 1-diphosphate is bound at residue Asp-209.

It belongs to the UPRTase family. Mg(2+) serves as cofactor.

It catalyses the reaction UMP + diphosphate = 5-phospho-alpha-D-ribose 1-diphosphate + uracil. Its pathway is pyrimidine metabolism; UMP biosynthesis via salvage pathway; UMP from uracil: step 1/1. With respect to regulation, allosterically activated by GTP. Its function is as follows. Catalyzes the conversion of uracil and 5-phospho-alpha-D-ribose 1-diphosphate (PRPP) to UMP and diphosphate. The polypeptide is Uracil phosphoribosyltransferase (Sulfolobus acidocaldarius (strain ATCC 33909 / DSM 639 / JCM 8929 / NBRC 15157 / NCIMB 11770)).